The following is an 855-amino-acid chain: Axonemal dynein light chain domain-containing protein 1 (855 aa).

Over residues 1–17 the composition is skewed to polar residues; the sequence is MSLPKTPSTPLNSASTS. The interval 1 to 31 is disordered; that stretch reads MSLPKTPSTPLNSASTSESKKLVSVATEGTR. Coiled-coil stretches lie at residues 316–402, 451–480, and 571–596; these read QRIL…WSSA, LQKLTQKWRNLVNKFKQEVEEMEESTRETL, and SERQYMEEIIKNIQKLYKEYEIRING.

It is found in the cytoplasm. In terms of biological role, may be essential for spermiogenesis and male fertility probably by regulating the manchette dynamics, spermatid head shaping and sperm flagellum assembly. This chain is Axonemal dynein light chain domain-containing protein 1 (AXDND1), found in Macaca fascicularis (Crab-eating macaque).